The chain runs to 61 residues: Small ribosomal subunit protein uS14 (61 aa).

Zn(2+)-binding residues include Cys24, Cys27, Cys40, and Cys43.

Belongs to the universal ribosomal protein uS14 family. Zinc-binding uS14 subfamily. In terms of assembly, part of the 30S ribosomal subunit. Contacts proteins S3 and S10. Zn(2+) is required as a cofactor.

Binds 16S rRNA, required for the assembly of 30S particles and may also be responsible for determining the conformation of the 16S rRNA at the A site. In Streptococcus thermophilus (strain CNRZ 1066), this protein is Small ribosomal subunit protein uS14.